Consider the following 174-residue polypeptide: Shikimate kinase 2 (174 aa).

An ATP-binding site is contributed by 12–17 (GCGKTT). 2 residues coordinate Mg(2+): Thr16 and Asp32. The substrate site is built by Asp34, Arg58, and Gly79. Residues 112–126 (QAAPEEDLRPTLTGK) are LID domain. ATP is bound at residue Arg120. Arg139 contacts substrate.

The protein belongs to the shikimate kinase family. AroL subfamily. In terms of assembly, monomer. Mg(2+) is required as a cofactor.

It is found in the cytoplasm. It catalyses the reaction shikimate + ATP = 3-phosphoshikimate + ADP + H(+). The protein operates within metabolic intermediate biosynthesis; chorismate biosynthesis; chorismate from D-erythrose 4-phosphate and phosphoenolpyruvate: step 5/7. In terms of biological role, catalyzes the specific phosphorylation of the 3-hydroxyl group of shikimic acid using ATP as a cosubstrate. The chain is Shikimate kinase 2 from Escherichia coli O7:K1 (strain IAI39 / ExPEC).